We begin with the raw amino-acid sequence, 400 residues long: S-adenosylmethionine sensor upstream of mTORC1 (400 aa).

Residues R99, G168, D186, D198, F199, and S240 each coordinate S-adenosyl-L-methionine.

It belongs to the BMT2/SAMTOR family. As to quaternary structure, interacts with the GATOR1 complex; interaction is disrupted when samtor binds S-adenosyl-L-methionine. Interacts with the KICSTOR complex; interaction is disrupted when samtor binds S-adenosyl-L-methionine.

Its function is as follows. S-adenosyl-L-methionine-binding protein that acts as an inhibitor of mTORC1 signaling via interaction with the GATOR1 and KICSTOR complexes. Acts as a sensor of S-adenosyl-L-methionine to signal methionine sufficiency to mTORC1: in presence of methionine, binds S-adenosyl-L-methionine, leading to disrupt interaction with the GATOR1 and KICSTOR complexes and promote mTORC1 signaling. Upon methionine starvation, S-adenosyl-L-methionine levels are reduced, thereby promoting the association with GATOR1 and KICSTOR, leading to inhibit mTORC1 signaling. Probably also acts as a S-adenosyl-L-methionine-dependent methyltransferase. In Xenopus tropicalis (Western clawed frog), this protein is S-adenosylmethionine sensor upstream of mTORC1.